Reading from the N-terminus, the 73-residue chain is Carboxysome shell vertex protein CsoS4B (73 aa).

A BMV domain is found at 1–68; sequence MVCTQRVAGL…TDLTIGGIID (68 aa).

This sequence belongs to the CcmL/EutN family. CsoS4 subfamily. In terms of assembly, homopentamer.

The protein localises to the carboxysome. Its function is as follows. Probably forms vertices in the carboxysome, a polyhedral inclusion where RuBisCO (ribulose bisphosphate carboxylase, cbbL-cbbS) is sequestered. Has been modeled to induce curvature upon insertion into an otherwise flat hexagonal layer of major carboxysome subunits. Has not been identified in purified carboxysomes; it is expected to be present in very low amounts. The polypeptide is Carboxysome shell vertex protein CsoS4B (Prochlorococcus marinus subsp. pastoris (strain CCMP1986 / NIES-2087 / MED4)).